The sequence spans 142 residues: Hemoglobin subunit alpha (142 aa).

The 141-residue stretch at 2–142 (VLSAADKTNV…VSTVLTSKYR (141 aa)) folds into the Globin domain. Serine 4 carries the post-translational modification Phosphoserine. At lysine 8 the chain carries N6-succinyllysine. Residue threonine 9 is modified to Phosphothreonine. Position 12 is an N6-succinyllysine (lysine 12). An N6-acetyllysine; alternate modification is found at lysine 17. The residue at position 17 (lysine 17) is an N6-succinyllysine; alternate. An N6-succinyllysine modification is found at lysine 41. Position 50 is a phosphoserine (serine 50). An O2-binding site is contributed by histidine 59. Histidine 88 is a heme b binding site. Residue serine 103 is modified to Phosphoserine. Residue threonine 109 is modified to Phosphothreonine. Phosphoserine occurs at positions 125 and 132. A phosphothreonine mark is found at threonine 135 and threonine 138. Residue serine 139 is modified to Phosphoserine.

Belongs to the globin family. As to quaternary structure, heterotetramer of two alpha chains and two beta chains. In terms of tissue distribution, red blood cells.

In terms of biological role, involved in oxygen transport from the lung to the various peripheral tissues. Functionally, hemopressin acts as an antagonist peptide of the cannabinoid receptor CNR1. Hemopressin-binding efficiently blocks cannabinoid receptor CNR1 and subsequent signaling. The protein is Hemoglobin subunit alpha (HBA) of Equus przewalskii (Przewalski's horse).